Here is a 3969-residue protein sequence, read N- to C-terminus: Histone-lysine N-methyltransferase 2A (3969 aa).

Disordered stretches follow at residues 1 to 108 (MAHS…LLRV), 132 to 253 (VFGE…EDSL), and 301 to 352 (RRRG…RQSP). The Menin-binding motif (MBM) motif lies at 6-25 (RWRFPARPGTTGGGGGGGRR). Residues 15–29 (TTGGGGGGGRRGLGG) show a composition bias toward gly residues. Composition is skewed to low complexity over residues 59 to 69 (AVAAAAAAAGS) and 77 to 104 (GAAA…SGPA). Positions 123–134 (GTNLRRFRAVFG) match the Integrase domain-binding motif 1 (IBM1) motif. 2 positions are modified to phosphoserine; by CK2: S136 and S142. The Integrase domain-binding motif 2 (IBM2) motif lies at 147-152 (QFLGFG). Residue S153 is modified to Phosphoserine. Positions 169–180 (KTSPRKPRGRPR) form a DNA-binding region, a.T hook 1. S197 is subject to Phosphoserine. Basic and acidic residues-rich tracts occupy residues 202–220 (SETK…SIEK) and 237–253 (HGKD…EDSL). Residues 217–227 (SIEKKRGRPPT) constitute a DNA-binding region (a.T hook 2). N6-acetyllysine is present on K239. The segment at residues 301–309 (RRRGRPPST) is a DNA-binding region (a.T hook 3). A compositionally biased stretch (basic and acidic residues) spans 323 to 347 (ELEKPQKVRKDKEGTPPLTKEDKTV). The residue at position 373 (K373) is an N6-acetyllysine. A disordered region spans residues 445-585 (STPNSRFSAP…SSISDHTPWL (141 aa)). Residues 452-491 (SAPSCGSSEKSSAASQHSSQMSSDSSRSSSPSVDTSTDSQ) show a composition bias toward low complexity. S518 carries the phosphoserine modification. The span at 546 to 559 (LSTLQSAPQQQTSS) shows a compositional bias: low complexity. The segment covering 560 to 573 (SPPPPLLTPPPPLQ) has biased composition (pro residues). K636 bears the N6-acetyllysine mark. S680 is subject to Phosphoserine. Disordered regions lie at residues 713–780 (ESVT…SSSL), 798–949 (FPSH…TSVT), 1038–1066 (EKSK…VRGP), and 1106–1166 (SSMG…VPED). Polar residues predominate over residues 716-732 (TLPSNRTSAGTSSSGVS). Positions 762–780 (LSSSELSPLTPPSSVSSSL) are enriched in low complexity. A compositionally biased stretch (polar residues) spans 798–808 (FPSHSLTQSGE). Low complexity predominate over residues 820 to 841 (TSAPAEPFSSSSPTPLFPWFTP). The residue at position 840 (T840) is a Phosphothreonine. Basic and acidic residues predominate over residues 846-890 (ERGRNKDKAPEELSKDRDADKSVEKDKSRERDREREKENKRESRK). Phosphoserine occurs at positions 926 and 1056. Residues 1043–1062 (LKQTDQPKAQGQESDSSETS) show a composition bias toward polar residues. K1130 carries the post-translational modification N6-acetyllysine. Residues 1147–1195 (KKGRRSRRCGQCPGCQVPEDCGVCTNCLDKPKFGGRNIKKQCCKMRKCQ) form a CXXC-type zinc finger. Residues C1155, C1158, C1161, C1167, C1170, C1173, C1189, and C1194 each contribute to the Zn(2+) site. The tract at residues 1200-1375 (MPSKAYLQKQ…PPVNKQENAG (176 aa)) is disordered. Basic and acidic residues predominate over residues 1220–1232 (SKTSEKKDSKESS). Residues 1233–1243 (VVKNVVDSSQK) show a composition bias toward low complexity. K1235 bears the N6-acetyllysine mark. Over residues 1248 to 1273 (AREDPAPKKSSSEPPPRKPVEEKSEE) the composition is skewed to basic and acidic residues. Residues 1284–1300 (KQATTPASRKSSKQVSQ) are compositionally biased toward polar residues. A compositionally biased stretch (pro residues) spans 1304 to 1313 (VIPPQPPTTG). 3 consecutive PHD-type zinc fingers follow at residues 1431-1482 (RVVC…CKFC), 1479-1533 (CKFC…CVRC), and 1566-1627 (GNFC…CTER). An interaction with histone H3K4me3 region spans residues 1584–1600 (KMMQCGKCDRWVHSKCE). The Bromo domain maps to 1635 to 1765 (ALEKELQISL…SFFIRQMERV (131 aa)). Disordered regions lie at residues 1663-1713 (YRQA…GVKR) and 1806-1869 (QERE…GIED). The span at 1826–1847 (APKPKGPGEPDSPTPLHPPTPP) shows a compositional bias: pro residues. The residue at position 1837 (S1837) is a Phosphoserine. Position 1845 is a phosphothreonine (T1845). A Phosphoserine modification is found at S1858. The segment at 1870-1910 (NRQCALCLTYGDDSANDAGRLLYIGQNEWTHVNCALWSAEV) adopts a C2HC pre-PHD-type zinc-finger fold. Residues 1931 to 1978 (LRCEFCQKPGATVGCCLTSCTSNYHFMCSRAKNCVFLDDKKVYCQRHR) form a PHD-type 4 zinc finger. The region spanning 2018 to 2074 (NIHMMIGSMTIDCLGILNDLSDCEDKLFPIGYQCSRVYWSTTDARKRCVYTCKIVEC) is the FYR N-terminal domain. Disordered regions lie at residues 2081–2133 (PDIN…TSGS), 2145–2232 (IRTP…TTGT), 2275–2333 (NKNS…KLAP), 2373–2460 (RGQR…EGNL), 2475–2618 (GQRP…RYPR), 2647–2675 (FYSS…STSD), and 2713–2821 (KISQ…KNLL). Residues 2095–2115 (IAHSPTSFTESSSKESQNTAE) show a composition bias toward polar residues. S2098 is modified (phosphoserine). Position 2147 is a phosphothreonine (T2147). Phosphoserine is present on residues S2151 and S2201. Residues 2214 to 2232 (RTGNTYSRNNVSSVSTTGT) are compositionally biased toward polar residues. The span at 2283–2302 (SSSSEMKQSSASDLVSKSSS) shows a compositional bias: low complexity. 2 stretches are compositionally biased toward polar residues: residues 2310-2319 (VLSSKSSEGS) and 2406-2421 (GMSN…MGSS). Positions 2432-2442 (SCKETFKEKHS) are enriched in basic and acidic residues. T2525 bears the Phosphothreonine mark. Residue K2528 forms a Glycyl lysine isopeptide (Lys-Gly) (interchain with G-Cter in SUMO2) linkage. Polar residues-rich tracts occupy residues 2543–2563 (SPAS…SASE) and 2573–2592 (PSPN…QNLP). S2611 is subject to Phosphoserine. Positions 2726–2741 (SDTSVTATTRKSSQIP) are enriched in polar residues. A compositionally biased stretch (basic and acidic residues) spans 2744-2782 (NGKENGTENLKIDRPEDAGEKEHVTKSSVGHKNEPKMDN). The segment covering 2784 to 2795 (HSVSRVKTQGQD) has biased composition (polar residues). A Phosphoserine modification is found at S2796. Residues 2796 to 2805 (SLEAQLSSLE) are compositionally biased toward low complexity. The segment covering 2812 to 2821 (TSTPSDKNLL) has biased composition (polar residues). The 9aaTAD signature appears at 2847–2855 (SDIMDFVLK). S2955 is modified (phosphoserine). The residue at position 2958 (K2958) is an N6-acetyllysine. Disordered stretches follow at residues 2961–3064 (TITE…NAAV) and 3166–3244 (PAAT…SNIA). 2 stretches are compositionally biased toward polar residues: residues 2963 to 2972 (TEKSVASSES) and 3016 to 3030 (HGNN…STPG). The residue at position 3036 (S3036) is a Phosphoserine. Positions 3039–3064 (VPIQNQKYVPNSTDSPGPSQISNAAV) are enriched in polar residues. Over residues 3171-3182 (SSFPPNISNPPS) the composition is skewed to low complexity. The segment covering 3198–3216 (VSESSQRTDLSTTVATPSS) has biased composition (polar residues). Over residues 3218–3233 (LKKRPISRLQTRKNKK) the composition is skewed to basic residues. T3372 carries the phosphothreonine modification. K3462 is modified (N6-acetyllysine). Disordered regions lie at residues 3464–3608 (GIHS…GQPA) and 3620–3643 (TQNP…SNFS). A compositionally biased stretch (polar residues) spans 3476-3489 (SGPQVSNFTQTVDA). Low complexity predominate over residues 3508 to 3529 (SPTSPGGSPSSPSSGQRSASPS). S3511, S3515, and S3527 each carry phosphoserine. Residues 3591 to 3603 (QDTASVEQSSQKE) are compositionally biased toward polar residues. One can recognise an FYR C-terminal domain in the interval 3666–3747 (KKGLVFEISS…KHCRNYKFRF (82 aa)). The WDR5 interaction motif (WIN) motif lies at 3762 to 3767 (GSARAE). The interval 3785-3808 (HRQPPEYNPNDEEEEEVQLKSARR) is disordered. The 117-residue stretch at 3829-3945 (EAVGVYRSPI…RGEELTYDYK (117 aa)) folds into the SET domain. The S-adenosyl-L-methionine site is built by H3839 and R3841. C3882 carries the S-methylcysteine; by autocatalysis modification. S-adenosyl-L-methionine-binding positions include Y3883 and 3906 to 3907 (NH). C3909 and C3957 together coordinate Zn(2+). The Post-SET domain maps to 3953–3969 (NKLPCNCGAKKCRKFLN). N3958 provides a ligand contact to S-adenosyl-L-methionine. Residues C3959 and C3964 each coordinate Zn(2+).

Belongs to the class V-like SAM-binding methyltransferase superfamily. Histone-lysine methyltransferase family. TRX/MLL subfamily. In terms of assembly, MLL cleavage product N320 heterodimerizes with MLL cleavage product C180 (via SET and FYRC domains). Component of some MLL1/MLL complex, at least composed of the core components KMT2A/MLL1, ASH2L, HCFC1/HCF1, HCFC2, WDR5, DPY30 and RBBP5, as well as the facultative components BACC1, CHD8, E2F6, HSP70, INO80C, KANSL1, LAS1L, MAX, MCRS1, MEN1, MGA, KAT8/MOF, PELP1, PHF20, PRP31, RING2, RUVB1/TIP49A, RUVB2/TIP49B, SENP3, TAF1, TAF4, TAF6, TAF7, TAF9 and TEX10. Forms a core complex with the evolutionary conserved subcomplex WRAD composed of WDR5, RBBP5, ASH2L/ASH2 and DPY30 subunits; WRAD differentially stimulates the methyltransferase activity. Interacts (via WIN motif) with WDR5; the interaction is direct. Interaction with WDR5 is required for stable interaction with ASH2L and RBBP5, and thereby also for optimal histone methyltransferase activity. Interacts with KAT8/MOF; the interaction is direct. Interacts with SBF1 and PPP1R15A. Interacts with ZNF335. Interacts with CLOCK and BMAL1 in a circadian manner. Interacts with PPIE; this results in decreased histone H3 methyltransferase activity. Interacts with CREBBP. Interacts with the WRAD complex composed of WDR5, RBBP5, ASH2L and DPY30. Interacts (via MBM motif) with MEN1. Interacts (via IBM motifs) with PSIP1 (via IBD domain) with moderate affinity whereas the KMT2A-MEN1 complex interacts with a greater affinity; MEN1 enhances interaction of KMT2A with PSIP1. Phosphorylation increases its affinity for PSIP1. Forms a complex with CREBBP and CREB1. As to quaternary structure, (Microbial infection) Interacts with herpes virus 8/HHV-8 protein LANA1; this interaction regulates the MLL1 histone methyltransferase activity on viral DNA. Proteolytic cleavage by TASP1 generates MLL cleavage product N320 and MLL cleavage product C180, which reassemble through a non-covalent association. 2 cleavage sites exist, cleavage site 1 (CS1) and cleavage site 2 (CS2), to generate MLL cleavage products N320 and C180. CS2 is the major site. In terms of processing, phosphorylation increases its interaction with PSIP1. Post-translationally, auto-methylated at Cys-3882: auto-methylation is inhibited by the WRAD complex and unmodified histone H3. In terms of tissue distribution, heart, lung, brain and T- and B-lymphocytes.

Its subcellular location is the nucleus. The enzyme catalyses L-lysyl(4)-[histone H3] + S-adenosyl-L-methionine = N(6)-methyl-L-lysyl(4)-[histone H3] + S-adenosyl-L-homocysteine + H(+). It catalyses the reaction N(6)-methyl-L-lysyl(4)-[histone H3] + S-adenosyl-L-methionine = N(6),N(6)-dimethyl-L-lysyl(4)-[histone H3] + S-adenosyl-L-homocysteine + H(+). It carries out the reaction L-cysteinyl-[protein] + S-adenosyl-L-methionine = S-methyl-L-cysteinyl-[protein] + S-adenosyl-L-homocysteine + H(+). Its function is as follows. Histone methyltransferase that plays an essential role in early development and hematopoiesis. Catalytic subunit of the MLL1/MLL complex, a multiprotein complex that mediates both methylation of 'Lys-4' of histone H3 (H3K4me) complex and acetylation of 'Lys-16' of histone H4 (H4K16ac). Catalyzes methyl group transfer from S-adenosyl-L-methionine to the epsilon-amino group of 'Lys-4' of histone H3 (H3K4) via a non-processive mechanism. Part of chromatin remodeling machinery predominantly forms H3K4me1 and H3K4me2 methylation marks at active chromatin sites where transcription and DNA repair take place. Has weak methyltransferase activity by itself, and requires other component of the MLL1/MLL complex to obtain full methyltransferase activity. Has no activity toward histone H3 phosphorylated on 'Thr-3', less activity toward H3 dimethylated on 'Arg-8' or 'Lys-9', while it has higher activity toward H3 acetylated on 'Lys-9'. Binds to unmethylated CpG elements in the promoter of target genes and helps maintain them in the nonmethylated state. Required for transcriptional activation of HOXA9. Promotes PPP1R15A-induced apoptosis. Plays a critical role in the control of circadian gene expression and is essential for the transcriptional activation mediated by the CLOCK-BMAL1 heterodimer. Establishes a permissive chromatin state for circadian transcription by mediating a rhythmic methylation of 'Lys-4' of histone H3 (H3K4me) and this histone modification directs the circadian acetylation at H3K9 and H3K14 allowing the recruitment of CLOCK-BMAL1 to chromatin. Also has auto-methylation activity on Cys-3882 in absence of histone H3 substrate. The sequence is that of Histone-lysine N-methyltransferase 2A (KMT2A) from Homo sapiens (Human).